The primary structure comprises 189 residues: dCTP deaminase (189 aa).

DCTP is bound by residues 112-117 (KSTYAR), 136-138 (TLE), Q157, Y171, and Q181. Residue E138 is the Proton donor/acceptor of the active site.

This sequence belongs to the dCTP deaminase family. Homotrimer.

The catalysed reaction is dCTP + H2O + H(+) = dUTP + NH4(+). It functions in the pathway pyrimidine metabolism; dUMP biosynthesis; dUMP from dCTP (dUTP route): step 1/2. Functionally, catalyzes the deamination of dCTP to dUTP. This chain is dCTP deaminase, found in Alcanivorax borkumensis (strain ATCC 700651 / DSM 11573 / NCIMB 13689 / SK2).